A 583-amino-acid polypeptide reads, in one-letter code: MTSRIQMHRTSPPPAYGTSAPPSGFTLGASTTSTLQRWALPLLLVAFGLFYLLPLTSHGLWIPDETRYAQISQEMLLSGDWVAPHFMGIRYFEKPIAGYWLIAIGQAVFGDNLFGVRIASALSTGLSVLLAYLITRRMWNDPRKSFAAALLYMSFGLIAGQAGYSNLDPQFTLWVNLSLVALWFALDGRSTRERLLAWAGLGVACGMGFMTKGFLAWLLPVLIALPYMIWQRRLGELVRYGLVAVLVAIGISLPWVLSIHAHEPDFWRFFFWHEHIRRFAADNAQHTRPWWFYLPLLVASSLPWAALLPGTFMQAWKDKRQAPTGFLLLWFLLPLAFFSLSRGKLPTYIMPCLLPLAVLMGSALIDRINAIQGRSIRINSLLNLLIGVAAMVALLYIQLTRPVYGHNEMLGLSLVFIMLMGWIIANLLPAARPLQYWPAPALGIWLLVALLPAGMPGFIVHNQMPDQFIKEHIEELRQTKTLLSNDLGAASALAWRLQRPEVTLYNTEGELKYGLAYADSAQRKVSMAEVGQWVSEARKQGSVGVVMRVKDVVESEEVALLPPGGKRYEEGNMLVLILPQSQP.

The disordered stretch occupies residues methionine 1–alanine 20. The next 12 helical transmembrane spans lie at leucine 42 to isoleucine 62, leucine 113 to threonine 135, serine 145 to serine 165, asparagine 166 to leucine 186, phenylalanine 209 to isoleucine 229, glycine 241 to alanine 261, tryptophan 290 to glycine 310, glutamine 321 to serine 341, leucine 345 to isoleucine 365, serine 380 to threonine 400, methionine 409 to proline 429, and proline 440 to valine 460.

The protein belongs to the glycosyltransferase 83 family.

Its subcellular location is the cell inner membrane. It catalyses the reaction 4-amino-4-deoxy-alpha-L-arabinopyranosyl di-trans,octa-cis-undecaprenyl phosphate + lipid IVA = lipid IIA + di-trans,octa-cis-undecaprenyl phosphate.. The protein operates within lipopolysaccharide metabolism; 4-amino-4-deoxy-beta-L-arabinose-lipid A biosynthesis. In terms of biological role, catalyzes the transfer of the L-Ara4N moiety of the glycolipid undecaprenyl phosphate-alpha-L-Ara4N to lipid A. The modified arabinose is attached to lipid A and is required for resistance to polymyxin and cationic antimicrobial peptides. The chain is Undecaprenyl phosphate-alpha-4-amino-4-deoxy-L-arabinose arabinosyl transferase 2 from Pseudomonas fluorescens (strain ATCC BAA-477 / NRRL B-23932 / Pf-5).